The chain runs to 293 residues: Pyridoxal 5'-phosphate synthase subunit PdxS (293 aa).

Residue Asp-25 participates in D-ribose 5-phosphate binding. Lys-82 (schiff-base intermediate with D-ribose 5-phosphate) is an active-site residue. Asp-103 is a binding site for D-ribulose 5-phosphate. Gly-154 lines the D-ribose 5-phosphate pocket. Position 166 (Arg-166) interacts with D-glyceraldehyde 3-phosphate. Residues Gly-215 and 236–237 contribute to the D-ribose 5-phosphate site; that span reads GS.

Belongs to the PdxS/SNZ family. Homohexamer and homododecamer. In the presence of PdxT, forms a dodecamer of heterodimers.

It carries out the reaction aldehydo-D-ribose 5-phosphate + D-glyceraldehyde 3-phosphate + L-glutamine = pyridoxal 5'-phosphate + L-glutamate + phosphate + 3 H2O + H(+). It functions in the pathway cofactor biosynthesis; pyridoxal 5'-phosphate biosynthesis. Functionally, catalyzes the formation of pyridoxal 5'-phosphate from ribose 5-phosphate (RBP), glyceraldehyde 3-phosphate (G3P) and ammonia. The ammonia is provided by the PdxT subunit. Can also use ribulose 5-phosphate and dihydroxyacetone phosphate as substrates, resulting from enzyme-catalyzed isomerization of RBP and G3P, respectively. This is Pyridoxal 5'-phosphate synthase subunit PdxS from Thermotoga maritima (strain ATCC 43589 / DSM 3109 / JCM 10099 / NBRC 100826 / MSB8).